A 396-amino-acid polypeptide reads, in one-letter code: Argininosuccinate synthase (396 aa).

9-17 contributes to the ATP binding site; that stretch reads AYSGGLDTS. Tyr85 contacts L-citrulline. Gly115 is an ATP binding site. L-aspartate-binding residues include Thr117, Asn121, and Asp122. Residue Asn121 coordinates L-citrulline. Arg125, Ser173, Glu258, and Tyr270 together coordinate L-citrulline.

It belongs to the argininosuccinate synthase family. Type 1 subfamily. Homotetramer.

Its subcellular location is the cytoplasm. It carries out the reaction L-citrulline + L-aspartate + ATP = 2-(N(omega)-L-arginino)succinate + AMP + diphosphate + H(+). Its pathway is amino-acid biosynthesis; L-arginine biosynthesis; L-arginine from L-ornithine and carbamoyl phosphate: step 2/3. The chain is Argininosuccinate synthase from Streptococcus agalactiae serotype V (strain ATCC BAA-611 / 2603 V/R).